Consider the following 25-residue polypeptide: Oxyopinin-3c (25 aa).

In terms of tissue distribution, expressed by the venom gland.

The protein localises to the secreted. Functionally, may have cytolytic and antimicrobial activity. The sequence is that of Oxyopinin-3c from Oxyopes takobius (Lynx spider).